Reading from the N-terminus, the 319-residue chain is CBBY-like protein (319 aa).

The N-terminal 65 residues, 1–65, are a transit peptide targeting the chloroplast; it reads MATVKISLSL…YRSSRSVGVT (65 aa). D82 serves as the catalytic Nucleophile. Mg(2+) is bound by residues D82 and D84. D82 contacts substrate. D84 (proton donor) is an active-site residue. Substrate contacts are provided by residues E91, 125–129, 158–161, and 198–204; these read GGKER, HKQK, and STSNEKA. D258 lines the Mg(2+) pocket.

Belongs to the HAD-like hydrolase superfamily. DOG/GPP family. Mg(2+) is required as a cofactor.

It localises to the plastid. The protein resides in the chloroplast. It catalyses the reaction D-xylulose 1,5-bisphosphate + H2O = D-xylulose 5-phosphate + phosphate. Highly selective xylulose-1,5-bisphosphate (XuBP) phosphatase. Also shows activity towards ribulose-1,5-bisphosphate (RuBP) and fructose-1,6-bisphosphate (FBP), but not towards fructose-6-phosphate (F6P) or ribulose-5-phosphate (Ru5P). Degrades xylulose-1,5-bisphosphate, a potent inhibitor of rubisco produced by the rubisco itself. The polypeptide is CBBY-like protein (Arabidopsis thaliana (Mouse-ear cress)).